The following is a 299-amino-acid chain: Polyamine aminopropyltransferase (299 aa).

The PABS domain occupies 6 to 252 (IVLLFALLCT…SLPNQQALQQ (247 aa)). S-methyl-5'-thioadenosine contacts are provided by residues glutamine 36, glutamate 120, and 147 to 148 (DA). Residue aspartate 168 is the Proton acceptor of the active site.

This sequence belongs to the spermidine/spermine synthase family. As to quaternary structure, homodimer or homotetramer.

It is found in the cytoplasm. The enzyme catalyses S-adenosyl 3-(methylsulfanyl)propylamine + putrescine = S-methyl-5'-thioadenosine + spermidine + H(+). Its pathway is amine and polyamine biosynthesis; spermidine biosynthesis; spermidine from putrescine: step 1/1. In terms of biological role, catalyzes the irreversible transfer of a propylamine group from the amino donor S-adenosylmethioninamine (decarboxy-AdoMet) to putrescine (1,4-diaminobutane) to yield spermidine. The sequence is that of Polyamine aminopropyltransferase from Vibrio vulnificus (strain CMCP6).